A 66-amino-acid chain; its full sequence is DNA gyrase inhibitor YacG (66 aa).

Positions 9, 12, 28, and 32 each coordinate Zn(2+).

This sequence belongs to the DNA gyrase inhibitor YacG family. Interacts with GyrB. It depends on Zn(2+) as a cofactor.

Inhibits all the catalytic activities of DNA gyrase by preventing its interaction with DNA. Acts by binding directly to the C-terminal domain of GyrB, which probably disrupts DNA binding by the gyrase. The sequence is that of DNA gyrase inhibitor YacG from Pseudomonas aeruginosa (strain LESB58).